Consider the following 160-residue polypeptide: Transcription antitermination protein NusB (160 aa).

Belongs to the NusB family.

Its function is as follows. Involved in transcription antitermination. Required for transcription of ribosomal RNA (rRNA) genes. Binds specifically to the boxA antiterminator sequence of the ribosomal RNA (rrn) operons. The polypeptide is Transcription antitermination protein NusB (Salinibacter ruber (strain DSM 13855 / M31)).